Consider the following 251-residue polypeptide: Aquaporin TIP1-1 (251 aa).

The residue at position 1 (Met-1) is an N-acetylmethionine. The Cytoplasmic portion of the chain corresponds to 1-23 (MPIRNIAIGRPDEATRPDALKAA). A helical transmembrane segment spans residues 24-44 (LAEFISTLIFVVAGSGSGMAF). The Vacuolar portion of the chain corresponds to 45-56 (NKLTENGATTPS). The helical transmembrane segment at 57–77 (GLVAAAVAHAFGLFVAVSVGA) threads the bilayer. Residues 78 to 103 (NISGGHVNPAVTFGAFIGGNITLLRG) lie on the Cytoplasmic side of the membrane. Residues 85 to 87 (NPA) carry the NPA 1 motif. The helical transmembrane segment at 104–124 (ILYWIAQLLGSVVACLILKFA) threads the bilayer. Topologically, residues 125-143 (TGGLAVPAFGLSAGVGVLN) are vacuolar. A helical transmembrane segment spans residues 144 to 164 (AFVFEIVMTFGLVYTVYATAI). Topologically, residues 165–172 (DPKNGSLG) are cytoplasmic. The helical transmembrane segment at 173-193 (TIAPIAIGFIVGANILAGGAF) threads the bilayer. The Vacuolar portion of the chain corresponds to 194-218 (SGASMNPAVAFGPAVVSWTWTNHWV). An NPA 2 motif is present at residues 199-201 (NPA). A helical membrane pass occupies residues 219 to 239 (YWAGPLVGGGIAGLIYEVFFI). At 240–251 (NTTHEQLPTTDY) the chain is on the cytoplasmic side.

The protein belongs to the MIP/aquaporin (TC 1.A.8) family. TIP (TC 1.A.8.10) subfamily. In terms of assembly, interacts with cucumber mosaic virus (CMV) Protein 1a. As to expression, in all the vegetative organs, but not in seeds. Preferentially expressed in roots.

It localises to the vacuole membrane. Water channel required to facilitate the transport of water, diffusion of amino acids and/or peptides from the vacuolar compartment to the cytoplasm. Does not promote glycerol permeability. May play a role in the control of cell turgor and cell expansion. Its function is impaired by Hg(2+). May be involved in a vesicle-based metabolite routing through or between pre-vacuolar compartments and the central vacuole. Transports urea in yeast cells in a pH-independent manner. Transports H(2)O(2) in yeast cells. The sequence is that of Aquaporin TIP1-1 (TIP1-1) from Arabidopsis thaliana (Mouse-ear cress).